The following is a 974-amino-acid chain: Toxin subunit YenC1 (974 aa).

RHS repeat units lie at residues 165–179 (AGQCLRHYNSAGLNQ), 290–304 (GVLTTYSYEAETQRL), 322–336 (FQDLRYTYDPVGNVL), 354–368 (VPENTYIYDTLYQLV), 398–412 (NYIRNYHYDSAGNLM), 490–504 (SDSETYRYDANSQRV), 570–584 (NDELRYSYDNLIGSS), 596–610 (SQEEYYPYGGTAVWM), and 630–644 (DATGLYYYGFRYYQP). The segment at 600-680 (YYPYGGTAVW…PIVLHDPDGL (81 aa)) is RHS-repeat associated core domain. The tract at residues 699–940 (ISSLKGTGPF…GEVSASTLLE (242 aa)) is cytotoxic necrotising factor domain.

Belongs to the RHS family. As to quaternary structure, semipurified toxin complex consists of at least YenA1-YenA2-YenB-YenC1-YenC2-Chi1-Chi2. The Yen-TC:K9 subcomplex is about 26 nm tall and 22 nm in diameter with 5-fold symmetry and 5 copies of YenA1, YenA2, Chi1 and Chi2; the chitinase subunits may be solvent accessible on the exterior the complex. The Yen-TC:K9 subcomplex has no insecticidal activity. The native complex with additional YenB, YenC1 and YenC2 subunits is 16 nm taller and is insecticidal; the toxicity-conferring subunits are present at about 1 copy each.

It localises to the secreted. With respect to regulation, toxin complex is secreted when grown at 25 degrees Celsius or less; at higher temperatures the proteins are present intracellularly but not secreted. In terms of biological role, part of an orally active toxin complex (TC) with strong insecticidal effects on larvae of the Coleoptera Costelytra zealandica, Acrossidius tasmania and Adoryphorus couloni and some Lepidoptera larvae. The TC has an endochitinase activity. The chain is Toxin subunit YenC1 from Yersinia entomophaga.